We begin with the raw amino-acid sequence, 418 residues long: Delta(14)-sterol reductase TM7SF2 (418 aa).

The next 6 helical transmembrane spans lie at 13–35, 62–81, 102–124, 129–148, 255–277, and 287–304; these read FGGP…HLLL, ALLL…LLPA, GFQA…LPLG, MLLP…SLLL, FGFM…QAQF, and LPMA…YYIF. NADP(+) is bound by residues K311, R315, L338, W343, and 350–351; that span reads NY. A helical transmembrane segment spans residues 355–377; sequence LIMALAWSLPCGLSHLLPYFYVL. Residues D390, 394 to 398, and Y405 each bind NADP(+); that span reads CLQKY.

The protein belongs to the ERG4/ERG24 family. Strongly expressed in liver, weaker in ovary, testis, kidney and brain.

The protein resides in the endoplasmic reticulum membrane. The protein localises to the microsome membrane. It carries out the reaction 4,4-dimethyl-5alpha-cholesta-8,24-dien-3beta-ol + NADP(+) = 4,4-dimethyl-5alpha-cholesta-8,14,24-trien-3beta-ol + NADPH + H(+). It catalyses the reaction 5alpha-cholest-8,14-dien-3beta-ol + NADPH + H(+) = 5alpha-cholest-8-en-3beta-ol + NADP(+). The catalysed reaction is 4,4-dimethyl-8,14-cholestadien-3beta-ol + NADPH + H(+) = 4,4-dimethyl-5alpha-cholest-8-en-3beta-ol + NADP(+). It functions in the pathway steroid biosynthesis; cholesterol biosynthesis. Its function is as follows. Catalyzes the reduction of the C14-unsaturated bond of lanosterol, as part of the metabolic pathway leading to cholesterol biosynthesis. In Mus musculus (Mouse), this protein is Delta(14)-sterol reductase TM7SF2 (Tm7sf2).